Consider the following 381-residue polypeptide: Homoserine O-succinyltransferase (381 aa).

Positions 45-360 (NAVLVCHALN…PHGHDAFLLD (316 aa)) constitute an AB hydrolase-1 domain. Ser-151 acts as the Nucleophile in catalysis. Arg-221 is a binding site for substrate. Active-site residues include Asp-321 and His-354. Position 355 (Asp-355) interacts with substrate.

It belongs to the AB hydrolase superfamily. MetX family. Homodimer.

The protein resides in the cytoplasm. The enzyme catalyses L-homoserine + succinyl-CoA = O-succinyl-L-homoserine + CoA. It participates in amino-acid biosynthesis; L-methionine biosynthesis via de novo pathway; O-succinyl-L-homoserine from L-homoserine: step 1/1. Its function is as follows. Transfers a succinyl group from succinyl-CoA to L-homoserine, forming succinyl-L-homoserine. The polypeptide is Homoserine O-succinyltransferase (Burkholderia ambifaria (strain MC40-6)).